A 61-amino-acid chain; its full sequence is Protein stunted (61 aa).

The tract at residues 3–15 (AWRAAGITYIQYS) is sufficient for mth activation.

This sequence belongs to the eukaryotic ATPase epsilon family.

Its function is as follows. Activates the G-protein coupled receptor mth in vitro, leading to increased intracellular calcium ion levels. The chain is Protein stunted from Drosophila melanogaster (Fruit fly).